The following is a 270-amino-acid chain: Calpain small subunit 1 (270 aa).

Met-1 is modified (N-acetylmethionine). The residue at position 6 (Ser-6) is a Phosphoserine. The EF-hand 1; atypical domain maps to 98–132 (EEERQFRKLFVQLAGDDMEVSATELMNILNKVVTR). Ca(2+)-binding residues include Ala-111, Asp-114, Glu-116, Glu-121, Asp-139, Asp-154, Asp-156, Thr-158, Lys-160, and Glu-165. 4 consecutive EF-hand domains span residues 141 to 174 (FGID…NNIK), 171 to 206 (NNIK…AGFH), 207 to 235 (LNQH…ISCL), and 236 to 270 (VRLD…TMYS). An N6-acetyllysine modification is found at Lys-181. The Ca(2+) site is built by Asp-184, Asp-186, Ser-188, Thr-190, Glu-195, and Asp-227.

Homodimer or heterodimer of a large (catalytic) and a small (regulatory) subunit. In presence of calcium, the heterodimer dissociates.

It localises to the cytoplasm. It is found in the cell membrane. Regulatory subunit of the calcium-regulated non-lysosomal thiol-protease which catalyzes limited proteolysis of substrates involved in cytoskeletal remodeling and signal transduction. Essential for embryonic development. The sequence is that of Calpain small subunit 1 (Capns1) from Rattus norvegicus (Rat).